Consider the following 477-residue polypeptide: 3-isopropylmalate dehydratase large subunit (477 aa).

Residues cysteine 352, cysteine 413, and cysteine 416 each contribute to the [4Fe-4S] cluster site.

It belongs to the aconitase/IPM isomerase family. LeuC type 1 subfamily. Heterodimer of LeuC and LeuD. [4Fe-4S] cluster is required as a cofactor.

The catalysed reaction is (2R,3S)-3-isopropylmalate = (2S)-2-isopropylmalate. The protein operates within amino-acid biosynthesis; L-leucine biosynthesis; L-leucine from 3-methyl-2-oxobutanoate: step 2/4. Its function is as follows. Catalyzes the isomerization between 2-isopropylmalate and 3-isopropylmalate, via the formation of 2-isopropylmaleate. This chain is 3-isopropylmalate dehydratase large subunit, found in Pseudomonas entomophila (strain L48).